A 520-amino-acid chain; its full sequence is Cholesterol side-chain cleavage enzyme, mitochondrial (520 aa).

The transit peptide at 1-36 directs the protein to the mitochondrion; sequence MLAKGLSLRSVLAKGCQPFLSPTWQSSVLATGGGAN. C458 serves as a coordination point for heme.

This sequence belongs to the cytochrome P450 family. In terms of assembly, interacts with FDX1/adrenodoxin. Heme serves as cofactor.

It localises to the mitochondrion inner membrane. It catalyses the reaction 6 reduced [adrenodoxin] + cholesterol + 3 O2 + 6 H(+) = 4-methylpentanal + pregnenolone + 6 oxidized [adrenodoxin] + 4 H2O. The catalysed reaction is 2 reduced [adrenodoxin] + cholesterol + O2 + 2 H(+) = (22R)-hydroxycholesterol + 2 oxidized [adrenodoxin] + H2O. It carries out the reaction (22R)-hydroxycholesterol + 2 reduced [adrenodoxin] + O2 + 2 H(+) = (20R,22R)-20,22-dihydroxycholesterol + 2 oxidized [adrenodoxin] + H2O. The enzyme catalyses (20R,22R)-20,22-dihydroxycholesterol + 2 reduced [adrenodoxin] + O2 + 2 H(+) = 4-methylpentanal + pregnenolone + 2 oxidized [adrenodoxin] + 2 H2O. The protein operates within lipid metabolism; C21-steroid hormone metabolism. Its pathway is steroid metabolism; cholesterol metabolism. Functionally, a cytochrome P450 monooxygenase that catalyzes the side-chain hydroxylation and cleavage of cholesterol to pregnenolone, the precursor of most steroid hormones. Catalyzes three sequential oxidation reactions of cholesterol, namely the hydroxylation at C22 followed with the hydroxylation at C20 to yield 20R,22R-hydroxycholesterol that is further cleaved between C20 and C22 to yield the C21-steroid pregnenolone and 4-methylpentanal. Mechanistically, uses molecular oxygen inserting one oxygen atom into a substrate and reducing the second into a water molecule. Two electrons are provided by NADPH via a two-protein mitochondrial transfer system comprising flavoprotein FDXR (adrenodoxin/ferredoxin reductase) and nonheme iron-sulfur protein FDX1 or FDX2 (adrenodoxin/ferredoxin). The sequence is that of Cholesterol side-chain cleavage enzyme, mitochondrial (CYP11A1) from Mesocricetus auratus (Golden hamster).